The sequence spans 322 residues: GTP 3',8-cyclase (322 aa).

A Radical SAM core domain is found at 5–217 (SYGRVVDYLR…DIISKKYNIK (213 aa)). Arginine 14 lines the GTP pocket. Residues cysteine 21 and cysteine 25 each coordinate [4Fe-4S] cluster. Position 27 (tyrosine 27) interacts with S-adenosyl-L-methionine. Position 28 (cysteine 28) interacts with [4Fe-4S] cluster. Arginine 64 serves as a coordination point for GTP. Glycine 68 provides a ligand contact to S-adenosyl-L-methionine. Position 95 (threonine 95) interacts with GTP. Residue serine 119 participates in S-adenosyl-L-methionine binding. A GTP-binding site is contributed by lysine 155. Methionine 189 contacts S-adenosyl-L-methionine. [4Fe-4S] cluster-binding residues include cysteine 249 and cysteine 252. Residue 254 to 256 (RLR) coordinates GTP. Residue cysteine 266 participates in [4Fe-4S] cluster binding.

Belongs to the radical SAM superfamily. MoaA family. As to quaternary structure, monomer and homodimer. It depends on [4Fe-4S] cluster as a cofactor.

It catalyses the reaction GTP + AH2 + S-adenosyl-L-methionine = (8S)-3',8-cyclo-7,8-dihydroguanosine 5'-triphosphate + 5'-deoxyadenosine + L-methionine + A + H(+). Its pathway is cofactor biosynthesis; molybdopterin biosynthesis. In terms of biological role, catalyzes the cyclization of GTP to (8S)-3',8-cyclo-7,8-dihydroguanosine 5'-triphosphate. This is GTP 3',8-cyclase from Campylobacter fetus subsp. fetus (strain 82-40).